The primary structure comprises 164 residues: Crossover junction endodeoxyribonuclease RuvC (164 aa).

Catalysis depends on residues D7, E67, and D139. Positions 7, 67, and 139 each coordinate Mg(2+).

Belongs to the RuvC family. In terms of assembly, homodimer which binds Holliday junction (HJ) DNA. The HJ becomes 2-fold symmetrical on binding to RuvC with unstacked arms; it has a different conformation from HJ DNA in complex with RuvA. In the full resolvosome a probable DNA-RuvA(4)-RuvB(12)-RuvC(2) complex forms which resolves the HJ. Requires Mg(2+) as cofactor.

The protein localises to the cytoplasm. It catalyses the reaction Endonucleolytic cleavage at a junction such as a reciprocal single-stranded crossover between two homologous DNA duplexes (Holliday junction).. In terms of biological role, the RuvA-RuvB-RuvC complex processes Holliday junction (HJ) DNA during genetic recombination and DNA repair. Endonuclease that resolves HJ intermediates. Cleaves cruciform DNA by making single-stranded nicks across the HJ at symmetrical positions within the homologous arms, yielding a 5'-phosphate and a 3'-hydroxyl group; requires a central core of homology in the junction. The consensus cleavage sequence is 5'-(A/T)TT(C/G)-3'. Cleavage occurs on the 3'-side of the TT dinucleotide at the point of strand exchange. HJ branch migration catalyzed by RuvA-RuvB allows RuvC to scan DNA until it finds its consensus sequence, where it cleaves and resolves the cruciform DNA. The chain is Crossover junction endodeoxyribonuclease RuvC from Geobacter sp. (strain M21).